We begin with the raw amino-acid sequence, 315 residues long: DNA-directed RNA polymerase subunit alpha (315 aa).

An alpha N-terminal domain (alpha-NTD) region spans residues 1 to 228 (MLEIEKPKIE…EHFKLFMTLT (228 aa)). Positions 245 to 315 (KEKVLEMAIE…LGLSLKQNED (71 aa)) are alpha C-terminal domain (alpha-CTD).

This sequence belongs to the RNA polymerase alpha chain family. As to quaternary structure, homodimer. The RNAP catalytic core consists of 2 alpha, 1 beta, 1 beta' and 1 omega subunit. When a sigma factor is associated with the core the holoenzyme is formed, which can initiate transcription.

The enzyme catalyses RNA(n) + a ribonucleoside 5'-triphosphate = RNA(n+1) + diphosphate. Functionally, DNA-dependent RNA polymerase catalyzes the transcription of DNA into RNA using the four ribonucleoside triphosphates as substrates. The polypeptide is DNA-directed RNA polymerase subunit alpha (Clostridium kluyveri (strain NBRC 12016)).